A 625-amino-acid chain; its full sequence is MPAVLRTRSKESSIEQKPASRTRTRSRRGKRGRDDDDDDDDEESDDAYDEVGNDYDEYASRAKLATNRPFEIVAGLPASVELPNYNSSLTHPQSIKNSGVLYDSLVSSRRTWVQGEMFELYWRRPKKIVSESTPAATESPTSGTIPLIRDKMQKMCDCVMSGGPHTFKVRLFILKNDKIEQKWQDEQELKKKEKELKRKNDAEAKRLRMEERKRQQMQKKIAKEQKLQLQKENKAKQKLEQEALKLKRKEEMKKLKEQNKNKQGSPSSSMHDPRMIMNLNLMAQEDPKLNTLMETVAKGLANNSQLEEFKKFIEIAKKRSLEENPVNKRPSVTTTRPAPPSKAKDVAEDHRLNSITLVKSSKTAATEPEPKKADDENAEKQQSKEAKTTAESTQVDVKKEEEDVKEKGVKSEDTQKKEDNQVVPKRKRRKNAIKEDKDMQLTAFQQKYVQGAEIILEYLEFTHSRYYLPKKSVVEFLEDTDEIIISWIVIHNSKEIEKFKTKKIKAKLKADQKLNKEDAKPGSDVEKEVSFNPLFEADCPTPLYTPMTMKLSGIHKRFNQIIRNSVSPMEEVVKEMEKILQIGTRLSGYNLWYQLDGYDDEALSESLRFELNEWEHAMRSRRHKR.

Disordered stretches follow at residues Met1 to Asn53, Lys194 to Lys234, Lys254 to Pro273, and Asn324 to Lys434. Basic residues predominate over residues Ser20–Arg31. Positions Asp35–Asn53 are enriched in acidic residues. Basic and acidic residues-rich tracts occupy residues Lys194–Arg214 and Ile221–Lys234. Positions Asn261 to Met270 are enriched in polar residues. The span at Lys342–Leu352 shows a compositional bias: basic and acidic residues. Residues Asn353–Ala364 show a composition bias toward polar residues. Composition is skewed to basic and acidic residues over residues Pro368–Thr388 and Asp396–Asn420.

It belongs to the SWC3 family. As to quaternary structure, component of the SWR1 chromatin remodeling complex composed of at least ACT1, ARP4, RVB1, RVB2, ARP6, YAF9, VPS71, VPS72, SWC3, SWC4, SWC5, SWC7 and SWR1, and perhaps BDF1.

It localises to the nucleus. Component of the SWR1 complex which mediates the ATP-dependent exchange of histone H2A for the H2A variant HZT1 leading to transcriptional regulation of selected genes by chromatin remodeling. Involved in chromosome stability. The polypeptide is SWR1-complex protein 3 (SWC3) (Saccharomyces cerevisiae (strain ATCC 204508 / S288c) (Baker's yeast)).